The sequence spans 101 residues: Small ribosomal subunit protein uS14 (101 aa).

It belongs to the universal ribosomal protein uS14 family. Part of the 30S ribosomal subunit. Contacts proteins S3 and S10.

Its function is as follows. Binds 16S rRNA, required for the assembly of 30S particles and may also be responsible for determining the conformation of the 16S rRNA at the A site. This chain is Small ribosomal subunit protein uS14, found in Xylella fastidiosa (strain 9a5c).